A 107-amino-acid polypeptide reads, in one-letter code: Iron-binding protein IscA (107 aa).

Residues Cys-35, Cys-99, and Cys-101 each contribute to the Fe cation site.

It belongs to the HesB/IscA family. In terms of assembly, homodimer; may form tetramers and higher multimers. It depends on Fe cation as a cofactor.

Is able to transfer iron-sulfur clusters to apo-ferredoxin. Multiple cycles of [2Fe2S] cluster formation and transfer are observed, suggesting that IscA acts catalytically. Recruits intracellular free iron so as to provide iron for the assembly of transient iron-sulfur cluster in IscU in the presence of IscS, L-cysteine and the thioredoxin reductase system TrxA/TrxB. This Enterobacter sp. (strain 638) protein is Iron-binding protein IscA.